A 377-amino-acid polypeptide reads, in one-letter code: Probable isocitrate dehydrogenase [NAD] subunit alpha, mitochondrial (377 aa).

Residues Arg-131, Arg-141, Arg-162, and Asp-249 each contribute to the substrate site. Mg(2+) is bound by residues Asp-249, Asp-273, and Asp-277.

This sequence belongs to the isocitrate and isopropylmalate dehydrogenases family. As to quaternary structure, heterooligomer of subunits alpha, beta, and gamma in the apparent ratio of 2:1:1. Mg(2+) serves as cofactor. The cofactor is Mn(2+).

It localises to the mitochondrion. The catalysed reaction is D-threo-isocitrate + NAD(+) = 2-oxoglutarate + CO2 + NADH. Probable catalytic subunit of the enzyme which catalyzes the decarboxylation of isocitrate (ICT) into alpha-ketoglutarate. This chain is Probable isocitrate dehydrogenase [NAD] subunit alpha, mitochondrial, found in Drosophila melanogaster (Fruit fly).